Here is a 408-residue protein sequence, read N- to C-terminus: DNA-directed RNA polymerase subunit Rpo1C (408 aa).

It belongs to the RNA polymerase beta' chain family. In terms of assembly, part of the RNA polymerase complex.

The protein localises to the cytoplasm. It carries out the reaction RNA(n) + a ribonucleoside 5'-triphosphate = RNA(n+1) + diphosphate. DNA-dependent RNA polymerase (RNAP) catalyzes the transcription of DNA into RNA using the four ribonucleoside triphosphates as substrates. Forms part of the jaw domain. The polypeptide is DNA-directed RNA polymerase subunit Rpo1C (Methanosarcina mazei (strain ATCC BAA-159 / DSM 3647 / Goe1 / Go1 / JCM 11833 / OCM 88) (Methanosarcina frisia)).